The chain runs to 446 residues: N-succinylarginine dihydrolase (446 aa).

Residues 19-28 (AGLSFGNEAS), N110, and 137-138 (HR) each bind substrate. E174 is an active-site residue. R213 provides a ligand contact to substrate. H249 is an active-site residue. 2 residues coordinate substrate: D251 and N364. Catalysis depends on C370, which acts as the Nucleophile.

It belongs to the succinylarginine dihydrolase family. As to quaternary structure, homodimer.

It carries out the reaction N(2)-succinyl-L-arginine + 2 H2O + 2 H(+) = N(2)-succinyl-L-ornithine + 2 NH4(+) + CO2. It participates in amino-acid degradation; L-arginine degradation via AST pathway; L-glutamate and succinate from L-arginine: step 2/5. Functionally, catalyzes the hydrolysis of N(2)-succinylarginine into N(2)-succinylornithine, ammonia and CO(2). The chain is N-succinylarginine dihydrolase from Serratia proteamaculans (strain 568).